The sequence spans 310 residues: Olfactory receptor 5H14 (310 aa).

Over 1-28 (MEEENATLLTEFVLTGFLYQPQWKIPLF) the chain is Extracellular. Asparagine 5 carries an N-linked (GlcNAc...) asparagine glycan. A helical membrane pass occupies residues 29–49 (LAFLVIYLITIMGNLGLIAVI). Residues 50–56 (WKDPHLH) lie on the Cytoplasmic side of the membrane. A helical membrane pass occupies residues 57-77 (IPMYLLLGNLAFVDALLSSSV). Residues 78-98 (TLKMLINFLAKSKMISLSECK) are Extracellular-facing. Residues cysteine 97 and cysteine 179 are joined by a disulfide bond. A helical membrane pass occupies residues 99 to 119 (IQLFSFAISVTTECFLLATMA). At 120-143 (YDRYVAICKPLLYPAIMTNGLCIR) the chain is on the cytoplasmic side. The chain crosses the membrane as a helical span at residues 144–164 (LLILSYVGGLLHALIHEGFLF). Residues 165 to 195 (RLTFCNSNIIQHFYCDIIPLLKISYTDSSIN) lie on the Extracellular side of the membrane. A helical transmembrane segment spans residues 196 to 216 (FLMVFIFAGSIQVFTIGTVLI). Residues 217–240 (SYIFVLYTILKKKSVKGMRKAFST) lie on the Cytoplasmic side of the membrane. The helical transmembrane segment at 241–261 (CGAHLLSVSLYYGPLAFMYMG) threads the bilayer. The Extracellular portion of the chain corresponds to 262–271 (SASPQADDQD). The chain crosses the membrane as a helical span at residues 272-292 (MMESLFYTVIVPLLNPMIYSL). The Cytoplasmic segment spans residues 293–310 (RNKQVIASFTKMFKRNDV).

It belongs to the G-protein coupled receptor 1 family.

Its subcellular location is the cell membrane. Its function is as follows. Odorant receptor. The polypeptide is Olfactory receptor 5H14 (OR5H14) (Homo sapiens (Human)).